Reading from the N-terminus, the 288-residue chain is S-methyl-5'-thioadenosine phosphorylase (288 aa).

Phosphate is bound by residues Ser-12, 54 to 55, and 87 to 88; these read RH and SA. Met-186 provides a ligand contact to substrate. Thr-187 contributes to the phosphate binding site. Substrate is bound at residue 210–212; it reads DYD.

This sequence belongs to the PNP/MTAP phosphorylase family. MTAP subfamily. In terms of assembly, homohexamer. Dimer of a homotrimer.

It carries out the reaction S-methyl-5'-thioadenosine + phosphate = 5-(methylsulfanyl)-alpha-D-ribose 1-phosphate + adenine. Its pathway is amino-acid biosynthesis; L-methionine biosynthesis via salvage pathway; S-methyl-5-thio-alpha-D-ribose 1-phosphate from S-methyl-5'-thioadenosine (phosphorylase route): step 1/1. Its function is as follows. Catalyzes the reversible phosphorylation of S-methyl-5'-thioadenosine (MTA) to adenine and 5-methylthioribose-1-phosphate. Involved in the breakdown of MTA, a major by-product of polyamine biosynthesis. Responsible for the first step in the methionine salvage pathway after MTA has been generated from S-adenosylmethionine. Has broad substrate specificity with 6-aminopurine nucleosides as preferred substrates. The polypeptide is S-methyl-5'-thioadenosine phosphorylase (Chloroflexus aurantiacus (strain ATCC 29366 / DSM 635 / J-10-fl)).